Reading from the N-terminus, the 395-residue chain is 8-amino-7-oxononanoate synthase (395 aa).

Substrate is bound at residue Arg24. 111-112 (GF) serves as a coordination point for pyridoxal 5'-phosphate. His136 serves as a coordination point for substrate. Pyridoxal 5'-phosphate is bound by residues Ser184, 209–212 (DDAH), and 240–243 (TLSK). Position 243 is an N6-(pyridoxal phosphate)lysine (Lys243). Thr357 lines the substrate pocket.

The protein belongs to the class-II pyridoxal-phosphate-dependent aminotransferase family. BioF subfamily. Homodimer. It depends on pyridoxal 5'-phosphate as a cofactor.

The enzyme catalyses 6-carboxyhexanoyl-[ACP] + L-alanine + H(+) = (8S)-8-amino-7-oxononanoate + holo-[ACP] + CO2. It participates in cofactor biosynthesis; biotin biosynthesis. In terms of biological role, catalyzes the decarboxylative condensation of pimeloyl-[acyl-carrier protein] and L-alanine to produce 8-amino-7-oxononanoate (AON), [acyl-carrier protein], and carbon dioxide. The chain is 8-amino-7-oxononanoate synthase from Thermoanaerobacter pseudethanolicus (strain ATCC 33223 / 39E) (Clostridium thermohydrosulfuricum).